A 354-amino-acid chain; its full sequence is Uroporphyrinogen decarboxylase (354 aa).

Residues 27–31, Asp-77, Tyr-154, Thr-209, and His-327 contribute to the substrate site; that span reads RQAGR.

This sequence belongs to the uroporphyrinogen decarboxylase family. As to quaternary structure, homodimer.

It is found in the cytoplasm. It carries out the reaction uroporphyrinogen III + 4 H(+) = coproporphyrinogen III + 4 CO2. Its pathway is porphyrin-containing compound metabolism; protoporphyrin-IX biosynthesis; coproporphyrinogen-III from 5-aminolevulinate: step 4/4. Catalyzes the decarboxylation of four acetate groups of uroporphyrinogen-III to yield coproporphyrinogen-III. The sequence is that of Uroporphyrinogen decarboxylase from Salmonella paratyphi A (strain ATCC 9150 / SARB42).